We begin with the raw amino-acid sequence, 160 residues long: Cyclic pyranopterin monophosphate synthase (160 aa).

Substrate-binding positions include 74-76 (LSH) and 112-113 (ME). The active site involves aspartate 127.

The protein belongs to the MoaC family. As to quaternary structure, homohexamer; trimer of dimers.

It catalyses the reaction (8S)-3',8-cyclo-7,8-dihydroguanosine 5'-triphosphate = cyclic pyranopterin phosphate + diphosphate. The protein operates within cofactor biosynthesis; molybdopterin biosynthesis. Catalyzes the conversion of (8S)-3',8-cyclo-7,8-dihydroguanosine 5'-triphosphate to cyclic pyranopterin monophosphate (cPMP). This Pelobacter propionicus (strain DSM 2379 / NBRC 103807 / OttBd1) protein is Cyclic pyranopterin monophosphate synthase.